The following is a 594-amino-acid chain: UvrABC system protein C (594 aa).

Residues 13-99 form the GIY-YIG domain; sequence SSSGVYQYFD…IKQLKPKYNI (87 aa). The UVR domain occupies 205 to 240; sequence DRLIKELELKMERLSSNLRFEEALIYRDRIAKIQKI.

It belongs to the UvrC family. Interacts with UvrB in an incision complex.

The protein resides in the cytoplasm. Functionally, the UvrABC repair system catalyzes the recognition and processing of DNA lesions. UvrC both incises the 5' and 3' sides of the lesion. The N-terminal half is responsible for the 3' incision and the C-terminal half is responsible for the 5' incision. The chain is UvrABC system protein C from Helicobacter pylori (strain J99 / ATCC 700824) (Campylobacter pylori J99).